The sequence spans 161 residues: Troponin C, slow skeletal and cardiac muscles (161 aa).

Methionine 1 is modified (N-acetylmethionine). 4 consecutive EF-hand domains span residues 16–51 (QKNE…LGQN), 52–87 (PTPE…CMKD), 92–127 (KSEE…TGET), and 128–161 (ITED…KGVE). The Ca(2+) site is built by aspartate 65, aspartate 67, serine 69, threonine 71, and glutamate 76. Serine 98 carries the phosphoserine modification. The Ca(2+) site is built by aspartate 105, asparagine 107, aspartate 109, tyrosine 111, glutamate 116, aspartate 141, asparagine 143, aspartate 145, arginine 147, and glutamate 152.

The protein belongs to the troponin C family.

In terms of biological role, troponin is the central regulatory protein of striated muscle contraction. Tn consists of three components: Tn-I which is the inhibitor of actomyosin ATPase, Tn-T which contains the binding site for tropomyosin and Tn-C. The binding of calcium to Tn-C abolishes the inhibitory action of Tn on actin filaments. This Mus musculus (Mouse) protein is Troponin C, slow skeletal and cardiac muscles (Tnnc1).